Consider the following 84-residue polypeptide: RNA-binding protein Hfq (84 aa).

Residues 11–71 (DTFLNHVRKN…ISTIMPGHPV (61 aa)) enclose the Sm domain.

Belongs to the Hfq family. Homohexamer.

In terms of biological role, RNA chaperone that binds small regulatory RNA (sRNAs) and mRNAs to facilitate mRNA translational regulation in response to envelope stress, environmental stress and changes in metabolite concentrations. Also binds with high specificity to tRNAs. This Methylorubrum populi (strain ATCC BAA-705 / NCIMB 13946 / BJ001) (Methylobacterium populi) protein is RNA-binding protein Hfq.